Here is a 42-residue protein sequence, read N- to C-terminus: Photosystem I reaction center subunit IX (42 aa).

Residues 7 to 27 (FLSTAPVLIMALLTVTAGILI) form a helical membrane-spanning segment.

This sequence belongs to the PsaJ family.

The protein localises to the cellular thylakoid membrane. Functionally, may help in the organization of the PsaE and PsaF subunits. In Crocosphaera subtropica (strain ATCC 51142 / BH68) (Cyanothece sp. (strain ATCC 51142)), this protein is Photosystem I reaction center subunit IX.